We begin with the raw amino-acid sequence, 682 residues long: Potassium-transporting ATPase ATP-binding subunit (682 aa).

The next 4 membrane-spanning stretches (helical) occupy residues proline 34–alanine 54, alanine 62–alanine 82, isoleucine 219–leucine 239, and valine 254–isoleucine 274. Residue aspartate 307 is the 4-aspartylphosphate intermediate of the active site. ATP-binding positions include aspartate 344, glutamate 348, phenylalanine 377–serine 384, and lysine 395. 2 residues coordinate Mg(2+): aspartate 518 and aspartate 522. The next 3 membrane-spanning stretches (helical) occupy residues phenylalanine 588–methionine 608, alanine 616–leucine 636, and isoleucine 656–leucine 676.

Belongs to the cation transport ATPase (P-type) (TC 3.A.3) family. Type IA subfamily. The system is composed of three essential subunits: KdpA, KdpB and KdpC.

It localises to the cell inner membrane. The catalysed reaction is K(+)(out) + ATP + H2O = K(+)(in) + ADP + phosphate + H(+). Functionally, part of the high-affinity ATP-driven potassium transport (or Kdp) system, which catalyzes the hydrolysis of ATP coupled with the electrogenic transport of potassium into the cytoplasm. This subunit is responsible for energy coupling to the transport system and for the release of the potassium ions to the cytoplasm. The chain is Potassium-transporting ATPase ATP-binding subunit from Escherichia coli (strain K12 / MC4100 / BW2952).